Here is a 220-residue protein sequence, read N- to C-terminus: Uracil-DNA glycosylase (220 aa).

Asp65 serves as the catalytic Proton acceptor.

It belongs to the uracil-DNA glycosylase (UDG) superfamily. UNG family.

The protein localises to the cytoplasm. It catalyses the reaction Hydrolyzes single-stranded DNA or mismatched double-stranded DNA and polynucleotides, releasing free uracil.. Its function is as follows. Excises uracil residues from the DNA which can arise as a result of misincorporation of dUMP residues by DNA polymerase or due to deamination of cytosine. The protein is Uracil-DNA glycosylase of Amoebophilus asiaticus (strain 5a2).